The chain runs to 137 residues: Putative pre-16S rRNA nuclease (137 aa).

The protein belongs to the YqgF nuclease family.

It is found in the cytoplasm. In terms of biological role, could be a nuclease involved in processing of the 5'-end of pre-16S rRNA. This is Putative pre-16S rRNA nuclease from Anaeromyxobacter dehalogenans (strain 2CP-C).